The primary structure comprises 435 residues: MAAPLETVMTPCQRFDGRNGASATPKSLAFSIERIMAKTSEPKAAAFQPSQGLDPGAKKMLNLCSPLPCMIPIQSLAYDVHSKALLNYSELWKSSLRGSVCSPSGLCKSNCGICCKNDLNMGHTVLPGSRVIKPQVINQTVGLPTNGSLYYFNYLDSSFHPPEILSGQLLSSSLINAQSQATLSAQQKLFLLENAKLSGLAPEKFPNPQYPHKERLPGQLDQVMKENSALSADRSGKIHSKLGANSAEGKPKIFTCEVCGKVFNAHYNLTRHMPVHTGARPFVCKVCGKGFRQASTLCRHKIIHTQEKPHKCNQCGKAFNRSSTLNTHIRIHAGYKPFVCEFCGKGFHQKGNYKNHKLTHSGEKQYKCTICNKAFHQIYNLTFHMHTHNDKKPFTCGTCGKGFCRNFDLKKHVRKLHDNVSSSCSLKEISRTGQS.

Positions 27–42 (SLAFSIERIMAKTSEP) match the Engrailed homology 1 repressor motif. C2H2-type zinc fingers lie at residues 254 to 276 (FTCEVCGKVFNAHYNLTRHMPVH), 282 to 304 (FVCKVCGKGFRQASTLCRHKIIH), 310 to 332 (HKCNQCGKAFNRSSTLNTHIRIH), 338 to 360 (FVCEFCGKGFHQKGNYKNHKLTH), 366 to 388 (YKCTICNKAFHQIYNLTFHMHTH), and 394 to 417 (FTCGTCGKGFCRNFDLKKHVRKLH).

This sequence belongs to the krueppel C2H2-type zinc-finger protein family.

The protein resides in the nucleus. Its function is as follows. Transcription repressor. Component of the regulatory cascade that controls the development of dopaminergic (DA) and serotonergic (5HT) neurons. In Xenopus tropicalis (Western clawed frog), this protein is Fez family zinc finger protein 2 (fezf2).